Consider the following 238-residue polypeptide: Uridylate kinase (238 aa).

12–15 (KLSG) is an ATP binding site. G54 contacts UMP. Positions 55 and 59 each coordinate ATP. UMP is bound by residues D74 and 135 to 142 (TGNPYFTT). Positions 162, 168, and 171 each coordinate ATP.

It belongs to the UMP kinase family. In terms of assembly, homohexamer.

Its subcellular location is the cytoplasm. It carries out the reaction UMP + ATP = UDP + ADP. It functions in the pathway pyrimidine metabolism; CTP biosynthesis via de novo pathway; UDP from UMP (UMPK route): step 1/1. With respect to regulation, inhibited by UTP. In terms of biological role, catalyzes the reversible phosphorylation of UMP to UDP. The protein is Uridylate kinase of Oleidesulfovibrio alaskensis (strain ATCC BAA-1058 / DSM 17464 / G20) (Desulfovibrio alaskensis).